Reading from the N-terminus, the 225-residue chain is Membrane protein (225 aa).

At 1–20 (MSNETNCTLDFEQSVQLFKE) the chain is on the virion surface side. Asn-3 and Asn-6 each carry an N-linked (GlcNAc...) asparagine; by host glycan. Residues 21 to 41 (YNLFITAFLLFLTIILQYGYA) traverse the membrane as a helical segment. The Intravirion portion of the chain corresponds to 42–51 (TRSKVIYTLK). A helical membrane pass occupies residues 52-72 (MIVLWCFWPLNIAVGVISCIY). The Virion surface portion of the chain corresponds to 73–77 (PPNTG). The helical transmembrane segment at 78–98 (GLVAAIILTVFACLSFVGYWI) threads the bilayer. At 99 to 225 (QSIRLFKRCR…VATGGSSLYT (127 aa)) the chain is on the intravirion side.

It belongs to the gammacoronaviruses M protein family. Homomultimer. Interacts with envelope E protein in the budding compartment of the host cell, which is located between endoplasmic reticulum and the Golgi complex. Forms a complex with HE and S proteins. Interacts with nucleocapsid N protein. This interaction probably participates in RNA packaging into the virus.

It is found in the virion membrane. Its subcellular location is the host Golgi apparatus membrane. In terms of biological role, component of the viral envelope that plays a central role in virus morphogenesis and assembly via its interactions with other viral proteins. This is Membrane protein from Gallus gallus (Chicken).